A 199-amino-acid chain; its full sequence is NAD(P)H-quinone oxidoreductase subunit 6, chloroplastic (199 aa).

5 helical membrane passes run 13 to 33, 35 to 55, 64 to 84, 96 to 118, and 157 to 177; these read AILL…VLFT, IVYS…LYIL, VQIL…VMLI, WTVG…IAAI, and LPFE…ITMA.

It belongs to the complex I subunit 6 family. NDH is composed of at least 16 different subunits, 5 of which are encoded in the nucleus.

The protein localises to the plastid. The protein resides in the chloroplast thylakoid membrane. It catalyses the reaction a plastoquinone + NADH + (n+1) H(+)(in) = a plastoquinol + NAD(+) + n H(+)(out). The catalysed reaction is a plastoquinone + NADPH + (n+1) H(+)(in) = a plastoquinol + NADP(+) + n H(+)(out). NDH shuttles electrons from NAD(P)H:plastoquinone, via FMN and iron-sulfur (Fe-S) centers, to quinones in the photosynthetic chain and possibly in a chloroplast respiratory chain. The immediate electron acceptor for the enzyme in this species is believed to be plastoquinone. Couples the redox reaction to proton translocation, and thus conserves the redox energy in a proton gradient. This is NAD(P)H-quinone oxidoreductase subunit 6, chloroplastic (ndhG) from Huperzia lucidula (Shining clubmoss).